A 332-amino-acid polypeptide reads, in one-letter code: Fructose-1,6-bisphosphatase class 1 (332 aa).

E93, D113, L115, and D116 together coordinate Mg(2+). Residues 116 to 119, N209, Y235, and K272 contribute to the substrate site; that span reads DGSS. A Mg(2+)-binding site is contributed by E278.

This sequence belongs to the FBPase class 1 family. As to quaternary structure, homotetramer. It depends on Mg(2+) as a cofactor.

The protein resides in the cytoplasm. The enzyme catalyses beta-D-fructose 1,6-bisphosphate + H2O = beta-D-fructose 6-phosphate + phosphate. It functions in the pathway carbohydrate biosynthesis; gluconeogenesis. The polypeptide is Fructose-1,6-bisphosphatase class 1 (Syntrophus aciditrophicus (strain SB)).